Here is a 539-residue protein sequence, read N- to C-terminus: Protein PNS1 (539 aa).

Residues 1–38 (MPLNEKYERPPQPPPAYDPNHRPPSSSENSAAANVNDG) are disordered. Topologically, residues 1 to 81 (MPLNEKYERP…NDNKPRWNDW (81 aa)) are cytoplasmic. Positions 25–36 (SSSENSAAANVN) are enriched in low complexity. Residues 82–102 (PFTIFFLCTVGGFIAIAAITL) form a helical membrane-spanning segment. Residues 103 to 129 (RAWSQTYSSTGSGIYDGVNTGTLNTNA) lie on the Extracellular side of the membrane. The chain crosses the membrane as a helical span at residues 130-150 (AILLVFVCIIALVFSVLGLTL). The Cytoplasmic portion of the chain corresponds to 151-157 (CRIFPKQ). Residues 158–178 (FIYCGMVINLVASLGTAIMYM) form a helical membrane-spanning segment. Over 179-182 (SLRY) the chain is Extracellular. Residues 183 to 203 (WSAGIVFLVFTFMTAWCYWGM) form a helical membrane-spanning segment. The Cytoplasmic segment spans residues 204 to 226 (RSRIPLSVAVLKVVVDAMKKCPQ). Residues 227–247 (IFFVSFVGALVASAFGFLFSA) form a helical membrane-spanning segment. At 248–274 (VIVATYIKYDPNSSNGGCDVSGGSCSH) the chain is on the extracellular side. The N-linked (GlcNAc...) asparagine glycan is linked to asparagine 259. A helical transmembrane segment spans residues 275-295 (SKLIGVLVVVFFCGYYISEVI). Over 296 to 332 (RNVIHCVISGVFGSWYYMSKSDQGMPRWPAFGALKRA) the chain is Cytoplasmic. The helical transmembrane segment at 333 to 353 (MTYSFGSICFGSLLVALIDLL) threads the bilayer. The Extracellular portion of the chain corresponds to 354 to 371 (RQILQMIRHDVTSSGGGQ). The chain crosses the membrane as a helical span at residues 372–392 (IAIQILFMVFDWIIGFLKWLA). The Cytoplasmic segment spans residues 393-436 (EYFNHYAYSFIALYGKPYLRAAKETWYMLREKGMDALINDNLIN). The helical transmembrane segment at 437–457 (IALGLFSMFASYMTALFTFLY) threads the bilayer. Residues 458–473 (LRFTSPQYNSNGAYNG) lie on the Extracellular side of the membrane. A helical transmembrane segment spans residues 474 to 494 (ALMAFSFVIALQICNIATEAI). Over 495 to 539 (RSGTATFFVALGNDPEVFHHSYPHRFDEIFRAYPDVLRKLSHQNV) the chain is Cytoplasmic.

It belongs to the CTL (choline transporter-like) family.

Its subcellular location is the cell membrane. Probably involved in transport through the plasma membrane. This chain is Protein PNS1 (PNS1), found in Saccharomyces cerevisiae (strain ATCC 204508 / S288c) (Baker's yeast).